The following is a 459-amino-acid chain: Diaminopimelate decarboxylase (459 aa).

K89 carries the post-translational modification N6-(pyridoxal phosphate)lysine. Pyridoxal 5'-phosphate-binding positions include G271 and 313–316; that span reads EPGR. 3 residues coordinate substrate: R316, R357, and Y361. The active-site Proton donor is the C388. Substrate is bound by residues E389 and Y418. Y418 contacts pyridoxal 5'-phosphate.

Belongs to the Orn/Lys/Arg decarboxylase class-II family. LysA subfamily. Homodimer. Requires pyridoxal 5'-phosphate as cofactor.

The catalysed reaction is meso-2,6-diaminopimelate + H(+) = L-lysine + CO2. The protein operates within amino-acid biosynthesis; L-lysine biosynthesis via DAP pathway; L-lysine from DL-2,6-diaminopimelate: step 1/1. Its function is as follows. Specifically catalyzes the decarboxylation of meso-diaminopimelate (meso-DAP) to L-lysine. In Corynebacterium efficiens (strain DSM 44549 / YS-314 / AJ 12310 / JCM 11189 / NBRC 100395), this protein is Diaminopimelate decarboxylase.